The following is a 1377-amino-acid chain: DNA-directed RNA polymerase subunit beta (1377 aa).

It belongs to the RNA polymerase beta chain family. In terms of assembly, the RNAP catalytic core consists of 2 alpha, 1 beta, 1 beta' and 1 omega subunit. When a sigma factor is associated with the core the holoenzyme is formed, which can initiate transcription.

It catalyses the reaction RNA(n) + a ribonucleoside 5'-triphosphate = RNA(n+1) + diphosphate. In terms of biological role, DNA-dependent RNA polymerase catalyzes the transcription of DNA into RNA using the four ribonucleoside triphosphates as substrates. This is DNA-directed RNA polymerase subunit beta from Azoarcus sp. (strain BH72).